A 421-amino-acid chain; its full sequence is MENIIMRNNLRQEIVTFGCRLNIYESEIIRKNLELSGLDNVAIFNTCAVTKSAEKQARQAIRKAKKNNPDLKIIVTGCSAQANPKMYGNMSEVDKVIGNEEKLLSHYYQITDQKISVNDIMSVKETACHLVSSFDGKSRAFIQVQNGCDHNCTFCIIPYVRGKSRSIPIGTIVAQVKHLVLKGFKEVVITGVDVTAYGSDLPGSPTFAQMIKRVLKLVPELKRMRLSSIDIAEIDDELFELIAYSERIMPHFHISVQSGDDMILKRMKRRHNRASVIEFCQKLRAIRPEVSFGADIIAGFPTETNEMFENTRKLILEAELQYLHVFPYSEREGTPAARMPQVPQNIRKERAKILRQDGFNQLNEFFKRHIGQKVELLIENNNIAHTENFIPVKLDKYLAIGQIFKAELVGIEEGYMKCVLV.

One can recognise an MTTase N-terminal domain in the interval 10–112 (LRQEIVTFGC…LLSHYYQITD (103 aa)). The [4Fe-4S] cluster site is built by Cys19, Cys47, Cys78, Cys148, Cys152, and Cys155. The 231-residue stretch at 134–364 (FDGKSRAFIQ…RQDGFNQLNE (231 aa)) folds into the Radical SAM core domain.

It belongs to the methylthiotransferase family. MtaB subfamily. It depends on [4Fe-4S] cluster as a cofactor.

It localises to the cytoplasm. It carries out the reaction N(6)-L-threonylcarbamoyladenosine(37) in tRNA + (sulfur carrier)-SH + AH2 + 2 S-adenosyl-L-methionine = 2-methylsulfanyl-N(6)-L-threonylcarbamoyladenosine(37) in tRNA + (sulfur carrier)-H + 5'-deoxyadenosine + L-methionine + A + S-adenosyl-L-homocysteine + 2 H(+). Functionally, catalyzes the methylthiolation of N6-threonylcarbamoyladenosine (t(6)A), leading to the formation of 2-methylthio-N6-threonylcarbamoyladenosine (ms(2)t(6)A) at position 37 in tRNAs that read codons beginning with adenine. The sequence is that of Threonylcarbamoyladenosine tRNA methylthiotransferase MtaB (mtaB) from Rickettsia prowazekii (strain Madrid E).